We begin with the raw amino-acid sequence, 284 residues long: 3-methyl-2-oxobutanoate hydroxymethyltransferase (284 aa).

Mg(2+) contacts are provided by Asp-52 and Asp-91. 3-methyl-2-oxobutanoate contacts are provided by residues 52–53 (DS), Asp-91, and Lys-121. Glu-123 provides a ligand contact to Mg(2+). The Proton acceptor role is filled by Glu-191.

This sequence belongs to the PanB family. As to quaternary structure, homodecamer; pentamer of dimers. It depends on Mg(2+) as a cofactor.

The protein resides in the cytoplasm. The catalysed reaction is 3-methyl-2-oxobutanoate + (6R)-5,10-methylene-5,6,7,8-tetrahydrofolate + H2O = 2-dehydropantoate + (6S)-5,6,7,8-tetrahydrofolate. The protein operates within cofactor biosynthesis; (R)-pantothenate biosynthesis; (R)-pantoate from 3-methyl-2-oxobutanoate: step 1/2. Functionally, catalyzes the reversible reaction in which hydroxymethyl group from 5,10-methylenetetrahydrofolate is transferred onto alpha-ketoisovalerate to form ketopantoate. The chain is 3-methyl-2-oxobutanoate hydroxymethyltransferase from Deinococcus radiodurans (strain ATCC 13939 / DSM 20539 / JCM 16871 / CCUG 27074 / LMG 4051 / NBRC 15346 / NCIMB 9279 / VKM B-1422 / R1).